The primary structure comprises 316 residues: Ribosomal RNA small subunit methyltransferase H (316 aa).

Residues 35–37, D55, F79, D101, and Q108 each bind S-adenosyl-L-methionine; that span reads GGH.

This sequence belongs to the methyltransferase superfamily. RsmH family.

The protein resides in the cytoplasm. The enzyme catalyses cytidine(1402) in 16S rRNA + S-adenosyl-L-methionine = N(4)-methylcytidine(1402) in 16S rRNA + S-adenosyl-L-homocysteine + H(+). In terms of biological role, specifically methylates the N4 position of cytidine in position 1402 (C1402) of 16S rRNA. The sequence is that of Ribosomal RNA small subunit methyltransferase H from Aliivibrio salmonicida (strain LFI1238) (Vibrio salmonicida (strain LFI1238)).